The sequence spans 350 residues: Protein RecA (350 aa).

65–72 (GPESSGKT) contributes to the ATP binding site.

Belongs to the RecA family.

The protein resides in the cytoplasm. Functionally, can catalyze the hydrolysis of ATP in the presence of single-stranded DNA, the ATP-dependent uptake of single-stranded DNA by duplex DNA, and the ATP-dependent hybridization of homologous single-stranded DNAs. It interacts with LexA causing its activation and leading to its autocatalytic cleavage. This chain is Protein RecA, found in Clostridium tetani (strain Massachusetts / E88).